A 620-amino-acid chain; its full sequence is UDP-glucose:protein N-beta-glucosyltransferase (620 aa).

Belongs to the glycosyltransferase 41 family. The cofactor is Does not require a metal cofactor..

The protein localises to the cytoplasm. It carries out the reaction L-asparaginyl-[protein] + UDP-alpha-D-glucose = N(4)-(beta-D-glucosyl)-L-asparaginyl-[protein] + UDP + H(+). It functions in the pathway protein modification; protein glycosylation. Its function is as follows. Inverting glycosyltransferase that catalyzes the transfer of one glucose moiety from UDP-glucose to an asparagine residue in peptides and proteins containing the NX(S/T) motif, resulting in their modification with a beta-linked 1,N-glucose. Likely acts as a key component of a general protein glycosylation system. Also accepts UDP-galactose as a substrate donor, albeit with low efficiency. Cannot use UDP-GlcNAc or UDP-GalNAc as substrate donor. This is UDP-glucose:protein N-beta-glucosyltransferase from Actinobacillus pleuropneumoniae serotype 7 (strain AP76).